Reading from the N-terminus, the 169-residue chain is Putative phosphoesterase BLi01284/BL02661 (169 aa).

The active-site Proton donor is the His34. Short sequence motifs (HXTX) lie at residues 34–37 (HLTL) and 115–118 (HVTV). The active-site Proton acceptor is His115.

This sequence belongs to the 2H phosphoesterase superfamily. YjcG family.

The protein is Putative phosphoesterase BLi01284/BL02661 of Bacillus licheniformis (strain ATCC 14580 / DSM 13 / JCM 2505 / CCUG 7422 / NBRC 12200 / NCIMB 9375 / NCTC 10341 / NRRL NRS-1264 / Gibson 46).